A 229-amino-acid polypeptide reads, in one-letter code: tRNA (guanine-N(7)-)-methyltransferase (229 aa).

4 residues coordinate S-adenosyl-L-methionine: E59, E84, D111, and D134. The active site involves D134. Position 138 (K138) interacts with substrate. Positions 140 to 145 (KHNKRR) are interaction with RNA. Residues D170 and 207–210 (TKFE) each bind substrate.

The protein belongs to the class I-like SAM-binding methyltransferase superfamily. TrmB family.

The catalysed reaction is guanosine(46) in tRNA + S-adenosyl-L-methionine = N(7)-methylguanosine(46) in tRNA + S-adenosyl-L-homocysteine. It functions in the pathway tRNA modification; N(7)-methylguanine-tRNA biosynthesis. Functionally, catalyzes the formation of N(7)-methylguanine at position 46 (m7G46) in tRNA. The sequence is that of tRNA (guanine-N(7)-)-methyltransferase from Saccharophagus degradans (strain 2-40 / ATCC 43961 / DSM 17024).